A 397-amino-acid polypeptide reads, in one-letter code: LIM/homeobox protein Lhx3 (397 aa).

2 LIM zinc-binding domains span residues 31 to 81 and 90 to 144; these read CAGC…CKDD and CAAC…CKAD. Residue threonine 63 is modified to Phosphothreonine. A Phosphoserine modification is found at serine 71. Residues 157–216 constitute a DNA-binding region (homeobox); it reads AKRPRTTITAKQLETLKSAYNTSPKPARHVREQLSSETGLDMRVVQVWFQNRRAKEKRLK. Residues 212-397 form a disordered region; that stretch reads EKRLKKDAGR…WLDEVDHAQF (186 aa). Tyrosine 227 is modified (phosphotyrosine). 2 positions are modified to phosphoserine: serine 234 and serine 238. Residues 316–331 show a composition bias toward pro residues; it reads GVPPSPAAPQSLPGPQ.

As to quaternary structure, interacts with POU1F1. At neuronal promoters, interacts with LDB1, in motor neurons LDB1 is displaced by ISL1 and a ternary complex is formed in which ISL1 contacts both LHX3 and LDB1; allosteric structural changes in the DNA binding domain of LHX3, induced by the ISL1-LHX3 interaction, may explain differences in sequence specificity of the different complexes. Interacts with LDB2. May interact with CITED2/MRG1.

It localises to the nucleus. Transcription factor. Recognizes and binds to the consensus sequence motif 5'-AATTAATTA-3' in the regulatory elements of target genes, such as glycoprotein hormones alpha chain CGA and visual system homeobox CHX10, positively modulating transcription; transcription can be co-activated by LDB2. Synergistically enhances transcription from the prolactin promoter in cooperation with POU1F1/Pit-1. Required for the establishment of the specialized cells of the pituitary gland and the nervous system. Involved in the development of interneurons and motor neurons in cooperation with LDB1 and ISL1. This Homo sapiens (Human) protein is LIM/homeobox protein Lhx3 (LHX3).